A 232-amino-acid chain; its full sequence is Phosphatidylserine decarboxylase proenzyme (232 aa).

Residue Ser190 is the Schiff-base intermediate with substrate; via pyruvic acid of the active site. Ser190 carries the post-translational modification Pyruvic acid (Ser); by autocatalysis.

Belongs to the phosphatidylserine decarboxylase family. PSD-A subfamily. In terms of assembly, heterodimer of a large membrane-associated beta subunit and a small pyruvoyl-containing alpha subunit. Pyruvate is required as a cofactor. Post-translationally, is synthesized initially as an inactive proenzyme. Formation of the active enzyme involves a self-maturation process in which the active site pyruvoyl group is generated from an internal serine residue via an autocatalytic post-translational modification. Two non-identical subunits are generated from the proenzyme in this reaction, and the pyruvate is formed at the N-terminus of the alpha chain, which is derived from the carboxyl end of the proenzyme. The post-translation cleavage follows an unusual pathway, termed non-hydrolytic serinolysis, in which the side chain hydroxyl group of the serine supplies its oxygen atom to form the C-terminus of the beta chain, while the remainder of the serine residue undergoes an oxidative deamination to produce ammonia and the pyruvoyl prosthetic group on the alpha chain.

The protein resides in the cell membrane. The enzyme catalyses a 1,2-diacyl-sn-glycero-3-phospho-L-serine + H(+) = a 1,2-diacyl-sn-glycero-3-phosphoethanolamine + CO2. It functions in the pathway phospholipid metabolism; phosphatidylethanolamine biosynthesis; phosphatidylethanolamine from CDP-diacylglycerol: step 2/2. Catalyzes the formation of phosphatidylethanolamine (PtdEtn) from phosphatidylserine (PtdSer). This Brucella canis (strain ATCC 23365 / NCTC 10854 / RM-666) protein is Phosphatidylserine decarboxylase proenzyme.